A 696-amino-acid polypeptide reads, in one-letter code: Elongation factor G (696 aa).

The tr-type G domain maps to 8 to 288; the sequence is EDYRNFGIMA…AVVEYLPSPA (281 aa). GTP-binding positions include 17 to 24, 86 to 90, and 140 to 143; these read AHIDAGKT, DTPGH, and NKMD.

The protein belongs to the TRAFAC class translation factor GTPase superfamily. Classic translation factor GTPase family. EF-G/EF-2 subfamily.

Its subcellular location is the cytoplasm. Its function is as follows. Catalyzes the GTP-dependent ribosomal translocation step during translation elongation. During this step, the ribosome changes from the pre-translocational (PRE) to the post-translocational (POST) state as the newly formed A-site-bound peptidyl-tRNA and P-site-bound deacylated tRNA move to the P and E sites, respectively. Catalyzes the coordinated movement of the two tRNA molecules, the mRNA and conformational changes in the ribosome. This Mesorhizobium japonicum (strain LMG 29417 / CECT 9101 / MAFF 303099) (Mesorhizobium loti (strain MAFF 303099)) protein is Elongation factor G.